The following is a 127-amino-acid chain: Large ribosomal subunit protein uL22 (127 aa).

Residues 106–117 (GAPEGVPVGGAV) are compositionally biased toward low complexity. Residues 106-127 (GAPEGVPVGGAVDTPGDEEEEE) are disordered.

It belongs to the universal ribosomal protein uL22 family. In terms of assembly, part of the 50S ribosomal subunit.

Functionally, this protein binds specifically to 23S rRNA; its binding is stimulated by other ribosomal proteins, e.g. L4, L17, and L20. It is important during the early stages of 50S assembly. It makes multiple contacts with different domains of the 23S rRNA in the assembled 50S subunit and ribosome. Its function is as follows. The globular domain of the protein is located near the polypeptide exit tunnel on the outside of the subunit, while an extended beta-hairpin is found that lines the wall of the exit tunnel in the center of the 70S ribosome. The sequence is that of Large ribosomal subunit protein uL22 from Rubrobacter xylanophilus (strain DSM 9941 / JCM 11954 / NBRC 16129 / PRD-1).